The sequence spans 504 residues: UDP-N-acetylglucosamine--peptide N-acetylglucosaminyltransferase GtfA subunit (504 aa).

16–19 serves as a coordination point for UDP; that stretch reads GVEY. Histidine 243 serves as a coordination point for N-acetyl-D-glucosamine. Residue 385–386 coordinates UDP; it reads HK. Position 405–408 (405–408) interacts with N-acetyl-D-glucosamine; sequence EGFG.

Belongs to the glycosyltransferase group 1 family. Glycosyltransferase 4 subfamily. Interacts with stabilizing protein GtfB (Gtf1), probably via the N-terminus of this protein; probably forms a heterotetramer with 2 subunits each of GtfA and GtfB. Part of the accessory SecA2/SecY2 protein translocation apparatus.

Its subcellular location is the cytoplasm. It localises to the cell membrane. It carries out the reaction L-seryl-[protein] + UDP-N-acetyl-alpha-D-glucosamine = 3-O-[N-acetyl-alpha-D-glucosaminyl]-L-seryl-[protein] + UDP + H(+). The protein operates within protein modification; protein glycosylation. In terms of biological role, required for polymorphic O-glycosylation of serine-rich repeat protein Fap1. Catalyzes the first step in glycosylation by transferring N-acetylglucosamine from UDP-GlcNAc to serine residues in Fap1. Part of the accessory SecA2/SecY2 system specifically required to export Fap1, a serine-rich fimbrial adhesin encoded upstream in the same operon. The GtfA-GtfB (Gtf1-Gtf2 in this bacteria) complex adds GlcNAc from UDP-GlcNAc to Fap1, attaching the first sugar residue. Cannot use not UDP-Glc as substrate. This subunit has very low glycosyltransferase activity; the GtfB stabilizing protein enhances membrane association, protease resistance and glycosyltransferase activity. The protein is UDP-N-acetylglucosamine--peptide N-acetylglucosaminyltransferase GtfA subunit of Streptococcus parasanguinis.